Reading from the N-terminus, the 212-residue chain is Peroxisomal membrane protein 4 (212 aa).

2 consecutive transmembrane segments (helical) span residues 97–117 (GGTH…LLFG) and 151–171 (LKWD…LWLF). Asn-206 is a glycosylation site (N-linked (GlcNAc...) asparagine).

This sequence belongs to the peroxisomal membrane protein PXMP2/4 family. Interacts with PEX19. As to expression, liver.

It localises to the peroxisome membrane. The chain is Peroxisomal membrane protein 4 (Pxmp4) from Rattus norvegicus (Rat).